Here is a 155-residue protein sequence, read N- to C-terminus: Ribosomal RNA large subunit methyltransferase H (155 aa).

Residues L72, G103, and 122 to 127 (LSDLTL) each bind S-adenosyl-L-methionine.

The protein belongs to the RNA methyltransferase RlmH family. As to quaternary structure, homodimer.

The protein localises to the cytoplasm. The catalysed reaction is pseudouridine(1915) in 23S rRNA + S-adenosyl-L-methionine = N(3)-methylpseudouridine(1915) in 23S rRNA + S-adenosyl-L-homocysteine + H(+). In terms of biological role, specifically methylates the pseudouridine at position 1915 (m3Psi1915) in 23S rRNA. This is Ribosomal RNA large subunit methyltransferase H from Variovorax paradoxus (strain S110).